The primary structure comprises 66 residues: Surface composition regulator (66 aa).

The protein belongs to the GlgS family.

In terms of biological role, major determinant of cell surface composition. Negatively regulates motility, adhesion and synthesis of biofilm exopolysaccharides. This chain is Surface composition regulator, found in Shigella flexneri.